An 87-amino-acid chain; its full sequence is Defensin-like protein 218 (87 aa).

The signal sequence occupies residues 1–19; sequence MKTIVCFLTILILVSSCES. 3 cysteine pairs are disulfide-bonded: C51–C70, C54–C75, and C58–C77.

The protein belongs to the DEFL family.

Its subcellular location is the secreted. The protein is Defensin-like protein 218 of Arabidopsis thaliana (Mouse-ear cress).